Reading from the N-terminus, the 156-residue chain is 6,7-dimethyl-8-ribityllumazine synthase (156 aa).

5-amino-6-(D-ribitylamino)uracil is bound by residues phenylalanine 22, 57–59 (AYE), and 81–83 (TVI). 86–87 (GT) contributes to the (2S)-2-hydroxy-3-oxobutyl phosphate binding site. The active-site Proton donor is histidine 89. Phenylalanine 114 provides a ligand contact to 5-amino-6-(D-ribitylamino)uracil. Residue arginine 128 coordinates (2S)-2-hydroxy-3-oxobutyl phosphate.

The protein belongs to the DMRL synthase family. Forms an icosahedral capsid composed of 60 subunits, arranged as a dodecamer of pentamers.

It carries out the reaction (2S)-2-hydroxy-3-oxobutyl phosphate + 5-amino-6-(D-ribitylamino)uracil = 6,7-dimethyl-8-(1-D-ribityl)lumazine + phosphate + 2 H2O + H(+). It participates in cofactor biosynthesis; riboflavin biosynthesis; riboflavin from 2-hydroxy-3-oxobutyl phosphate and 5-amino-6-(D-ribitylamino)uracil: step 1/2. In terms of biological role, catalyzes the formation of 6,7-dimethyl-8-ribityllumazine by condensation of 5-amino-6-(D-ribitylamino)uracil with 3,4-dihydroxy-2-butanone 4-phosphate. This is the penultimate step in the biosynthesis of riboflavin. The sequence is that of 6,7-dimethyl-8-ribityllumazine synthase from Enterobacter sp. (strain 638).